A 254-amino-acid polypeptide reads, in one-letter code: NAD-dependent protein deacetylase 1 (254 aa).

Residues 3–252 (VDFTTDELDE…PKLLDRLRGM (250 aa)) form the Deacetylase sirtuin-type domain. Residues Ala-29, Thr-33, Phe-40, Arg-41, Gln-105, Val-107, Asp-108, and His-123 each contribute to the NAD(+) site. A nicotinamide-binding site is contributed by Phe-40. Nicotinamide-binding residues include Val-107 and Asp-108. His-123 serves as the catalytic Proton acceptor. The Zn(2+) site is built by Cys-131, Cys-134, Cys-154, and Cys-157. Residues Thr-195, Ser-196, and Asn-220 each contribute to the NAD(+) site.

This sequence belongs to the sirtuin family. Class U subfamily. Zn(2+) is required as a cofactor.

It is found in the cytoplasm. It carries out the reaction N(6)-acetyl-L-lysyl-[protein] + NAD(+) + H2O = 2''-O-acetyl-ADP-D-ribose + nicotinamide + L-lysyl-[protein]. Functionally, NAD-dependent protein deacetylase which modulates the activities of several enzymes which are inactive in their acetylated form. Deacetylates the N-terminal lysine residue of Alba, the major archaeal chromatin protein and that, in turn, increases Alba's DNA binding affinity, thereby repressing transcription. The protein is NAD-dependent protein deacetylase 1 of Pyrobaculum aerophilum (strain ATCC 51768 / DSM 7523 / JCM 9630 / CIP 104966 / NBRC 100827 / IM2).